Here is a 241-residue protein sequence, read N- to C-terminus: 1-(5-phosphoribosyl)-5-[(5-phosphoribosylamino)methylideneamino] imidazole-4-carboxamide isomerase (241 aa).

Catalysis depends on Asp8, which acts as the Proton acceptor. Asp129 (proton donor) is an active-site residue.

The protein belongs to the HisA/HisF family.

The protein localises to the cytoplasm. The catalysed reaction is 1-(5-phospho-beta-D-ribosyl)-5-[(5-phospho-beta-D-ribosylamino)methylideneamino]imidazole-4-carboxamide = 5-[(5-phospho-1-deoxy-D-ribulos-1-ylimino)methylamino]-1-(5-phospho-beta-D-ribosyl)imidazole-4-carboxamide. It functions in the pathway amino-acid biosynthesis; L-histidine biosynthesis; L-histidine from 5-phospho-alpha-D-ribose 1-diphosphate: step 4/9. This Caulobacter sp. (strain K31) protein is 1-(5-phosphoribosyl)-5-[(5-phosphoribosylamino)methylideneamino] imidazole-4-carboxamide isomerase.